We begin with the raw amino-acid sequence, 78 residues long: Putative membrane protein insertion efficiency factor (78 aa).

Belongs to the UPF0161 family.

The protein localises to the cell membrane. Its function is as follows. Could be involved in insertion of integral membrane proteins into the membrane. The sequence is that of Putative membrane protein insertion efficiency factor from Bacillus mycoides (strain KBAB4) (Bacillus weihenstephanensis).